Reading from the N-terminus, the 351-residue chain is Homocitrate synthase (351 aa).

The Pyruvate carboxyltransferase domain occupies 23-272; the sequence is IKFCDTTLRD…KLPVDLDTTS (250 aa).

The protein belongs to the alpha-IPM synthase/homocitrate synthase family.

The catalysed reaction is acetyl-CoA + 2-oxoglutarate + H2O = (2R)-homocitrate + CoA + H(+). In terms of biological role, this protein is a Fe-Mo-cofactor biosynthetic component. The sequence is that of Homocitrate synthase (nifV) from Frankia alni.